A 229-amino-acid polypeptide reads, in one-letter code: Protein N-lysine methyltransferase METTL21D (229 aa).

A2 is modified (N-acetylalanine). Phosphoserine is present on S8. S-adenosyl-L-methionine contacts are provided by residues W43, 75–77 (GSG), D96, W126, A143, and Y148.

The protein belongs to the methyltransferase superfamily. METTL21 family. As to quaternary structure, interacts with ALKBH6. Interacts with ASPSCR1 and UBXN6; interaction with ASPSCR1, but not with UBXN6, enhances VCP methylation.

Its subcellular location is the cytoplasm. It carries out the reaction L-lysyl-[protein] + 3 S-adenosyl-L-methionine = N(6),N(6),N(6)-trimethyl-L-lysyl-[protein] + 3 S-adenosyl-L-homocysteine + 3 H(+). Protein N-lysine methyltransferase that specifically trimethylates 'Lys-315' of VCP/p97; this modification may decrease VCP ATPase activity. The chain is Protein N-lysine methyltransferase METTL21D (VCPKMT) from Homo sapiens (Human).